The chain runs to 681 residues: Methionine--tRNA ligase (681 aa).

The short motif at 14-24 (PYANGSIHLGH) is the 'HIGH' region element. Residues C145, C148, C158, and C161 each coordinate Zn(2+). Positions 331-335 (KMSKS) match the 'KMSKS' region motif. Position 334 (K334) interacts with ATP. A tRNA-binding domain is found at 579–681 (AFAAIDLRVA…SGAKPGQRIK (103 aa)).

Belongs to the class-I aminoacyl-tRNA synthetase family. MetG type 1 subfamily. In terms of assembly, homodimer. Zn(2+) is required as a cofactor.

It is found in the cytoplasm. It catalyses the reaction tRNA(Met) + L-methionine + ATP = L-methionyl-tRNA(Met) + AMP + diphosphate. Functionally, is required not only for elongation of protein synthesis but also for the initiation of all mRNA translation through initiator tRNA(fMet) aminoacylation. The sequence is that of Methionine--tRNA ligase from Pseudomonas fluorescens (strain ATCC BAA-477 / NRRL B-23932 / Pf-5).